Consider the following 251-residue polypeptide: Pyridoxine 5'-phosphate synthase (251 aa).

The 3-amino-2-oxopropyl phosphate site is built by N8 and R19. The active-site Proton acceptor is H44. 2 residues coordinate 1-deoxy-D-xylulose 5-phosphate: R46 and H51. Residue E76 is the Proton acceptor of the active site. T106 serves as a coordination point for 1-deoxy-D-xylulose 5-phosphate. H200 serves as the catalytic Proton donor. Residues D201 and 223 to 224 (GH) each bind 3-amino-2-oxopropyl phosphate.

Belongs to the PNP synthase family. As to quaternary structure, homooctamer; tetramer of dimers.

The protein localises to the cytoplasm. It catalyses the reaction 3-amino-2-oxopropyl phosphate + 1-deoxy-D-xylulose 5-phosphate = pyridoxine 5'-phosphate + phosphate + 2 H2O + H(+). Its pathway is cofactor biosynthesis; pyridoxine 5'-phosphate biosynthesis; pyridoxine 5'-phosphate from D-erythrose 4-phosphate: step 5/5. In terms of biological role, catalyzes the complicated ring closure reaction between the two acyclic compounds 1-deoxy-D-xylulose-5-phosphate (DXP) and 3-amino-2-oxopropyl phosphate (1-amino-acetone-3-phosphate or AAP) to form pyridoxine 5'-phosphate (PNP) and inorganic phosphate. This is Pyridoxine 5'-phosphate synthase from Agrobacterium fabrum (strain C58 / ATCC 33970) (Agrobacterium tumefaciens (strain C58)).